Here is a 117-residue protein sequence, read N- to C-terminus: Immunoglobulin kappa variable 1-17 (117 aa).

Positions 1 to 22 (MDMRVPAQLLGLLLLWFPGARC) are cleaved as a signal peptide. The interval 23–45 (DIQMTQSPSSLSASVGDRVTITC) is framework-1. The region spanning 24 to 117 (IQMTQSPSSL…YYCLQHNSYP (94 aa)) is the Ig-like domain. A disulfide bridge links Cys-45 with Cys-110. The segment at 46–56 (RASQGIRNDLG) is complementarity-determining-1. Residues 57–71 (WYQQKPGKAPKRLIY) are framework-2. The interval 72–78 (AASSLQS) is complementarity-determining-2. The segment at 79–110 (GVPSRFSGSGSGTEFTLTISSLQPEDFATYYC) is framework-3. Residues 111 to 117 (LQHNSYP) form a complementarity-determining-3 region.

Immunoglobulins are composed of two identical heavy chains and two identical light chains; disulfide-linked.

The protein localises to the secreted. It localises to the cell membrane. Its function is as follows. V region of the variable domain of immunoglobulin light chains that participates in the antigen recognition. Immunoglobulins, also known as antibodies, are membrane-bound or secreted glycoproteins produced by B lymphocytes. In the recognition phase of humoral immunity, the membrane-bound immunoglobulins serve as receptors which, upon binding of a specific antigen, trigger the clonal expansion and differentiation of B lymphocytes into immunoglobulins-secreting plasma cells. Secreted immunoglobulins mediate the effector phase of humoral immunity, which results in the elimination of bound antigens. The antigen binding site is formed by the variable domain of one heavy chain, together with that of its associated light chain. Thus, each immunoglobulin has two antigen binding sites with remarkable affinity for a particular antigen. The variable domains are assembled by a process called V-(D)-J rearrangement and can then be subjected to somatic hypermutations which, after exposure to antigen and selection, allow affinity maturation for a particular antigen. This is Immunoglobulin kappa variable 1-17 from Homo sapiens (Human).